A 103-amino-acid chain; its full sequence is Large ribosomal subunit protein bL21 (103 aa).

The protein belongs to the bacterial ribosomal protein bL21 family. Part of the 50S ribosomal subunit. Contacts protein L20.

This protein binds to 23S rRNA in the presence of protein L20. This Actinobacillus pleuropneumoniae serotype 5b (strain L20) protein is Large ribosomal subunit protein bL21.